The following is an 88-amino-acid chain: Small ribosomal subunit protein bS20 (88 aa).

The interval 1–27 (MANSKSAKKRALQSEKRRQHNASRRSM) is disordered.

The protein belongs to the bacterial ribosomal protein bS20 family.

Binds directly to 16S ribosomal RNA. In Shewanella putrefaciens (strain CN-32 / ATCC BAA-453), this protein is Small ribosomal subunit protein bS20.